Consider the following 717-residue polypeptide: Polyribonucleotide nucleotidyltransferase (717 aa).

D496 and D502 together coordinate Mg(2+). One can recognise a KH domain in the interval 563–622; the sequence is PRLLSFKIDPEMIGLVIGPGGKTIKGITEETGVKIDIDDDGTVTIAAADGEKAKQACNII. The S1 motif domain occupies 632–700; that stretch reads GDVYVGRVTR…SKGRVNLTRL (69 aa).

It belongs to the polyribonucleotide nucleotidyltransferase family. It depends on Mg(2+) as a cofactor.

The protein resides in the cytoplasm. The enzyme catalyses RNA(n+1) + phosphate = RNA(n) + a ribonucleoside 5'-diphosphate. Functionally, involved in mRNA degradation. Catalyzes the phosphorolysis of single-stranded polyribonucleotides processively in the 3'- to 5'-direction. This is Polyribonucleotide nucleotidyltransferase from Trichodesmium erythraeum (strain IMS101).